Consider the following 345-residue polypeptide: tRNA N6-adenosine threonylcarbamoyltransferase (345 aa).

Residues histidine 111 and histidine 115 each coordinate Fe cation. Substrate is bound by residues 134–138 (LVSGG), aspartate 167, glycine 180, aspartate 184, and asparagine 278. A Fe cation-binding site is contributed by aspartate 306.

This sequence belongs to the KAE1 / TsaD family. It depends on Fe(2+) as a cofactor.

The protein resides in the cytoplasm. It carries out the reaction L-threonylcarbamoyladenylate + adenosine(37) in tRNA = N(6)-L-threonylcarbamoyladenosine(37) in tRNA + AMP + H(+). Functionally, required for the formation of a threonylcarbamoyl group on adenosine at position 37 (t(6)A37) in tRNAs that read codons beginning with adenine. Is involved in the transfer of the threonylcarbamoyl moiety of threonylcarbamoyl-AMP (TC-AMP) to the N6 group of A37, together with TsaE and TsaB. TsaD likely plays a direct catalytic role in this reaction. The chain is tRNA N6-adenosine threonylcarbamoyltransferase from Cyanothece sp. (strain PCC 7425 / ATCC 29141).